The sequence spans 157 residues: Probable succinate transporter subunit YjjB (157 aa).

4 consecutive transmembrane segments (helical) span residues 2–22 (GIIS…IPAV), 55–75 (AGFN…SIGI), 87–107 (IFTV…TAMI), and 129–149 (FLKA…PGLW).

It belongs to the ThrE exporter (TC 2.A.79) family. As to quaternary structure, the transporter is composed of YjjB and YjjP.

The protein resides in the cell inner membrane. Involved in succinate export with YjjP. Both proteins are required for export. In Klebsiella pneumoniae (strain 342), this protein is Probable succinate transporter subunit YjjB.